The chain runs to 399 residues: Nicotinate phosphoribosyltransferase (399 aa).

Histidine 217 is modified (phosphohistidine; by autocatalysis).

It belongs to the NAPRTase family. Post-translationally, transiently phosphorylated on a His residue during the reaction cycle. Phosphorylation strongly increases the affinity for substrates and increases the rate of nicotinate D-ribonucleotide production. Dephosphorylation regenerates the low-affinity form of the enzyme, leading to product release.

The enzyme catalyses nicotinate + 5-phospho-alpha-D-ribose 1-diphosphate + ATP + H2O = nicotinate beta-D-ribonucleotide + ADP + phosphate + diphosphate. It participates in cofactor biosynthesis; NAD(+) biosynthesis; nicotinate D-ribonucleotide from nicotinate: step 1/1. Its function is as follows. Catalyzes the synthesis of beta-nicotinate D-ribonucleotide from nicotinate and 5-phospho-D-ribose 1-phosphate at the expense of ATP. The sequence is that of Nicotinate phosphoribosyltransferase from Burkholderia mallei (strain ATCC 23344).